Consider the following 474-residue polypeptide: Alanine/serine racemase (474 aa).

Pyridoxal 5'-phosphate is bound by residues 139–140 (GS) and Gln282. An N6-(pyridoxal phosphate)lysine modification is found at Lys308. Residue Thr336 participates in pyridoxal 5'-phosphate binding.

The protein belongs to the class-III pyridoxal-phosphate-dependent aminotransferase family. In terms of assembly, homohexamer. Pyridoxal 5'-phosphate serves as cofactor.

It catalyses the reaction L-alanine = D-alanine. The enzyme catalyses L-serine = D-serine. Completely inhibited by hydroxylamine hydrochloride. Its function is as follows. Catalyzes the interconversion of L-alanine and D-alanine, and L-serine and D-serine. Has weak activity with valine and threonine. The chain is Alanine/serine racemase from Pyrococcus horikoshii (strain ATCC 700860 / DSM 12428 / JCM 9974 / NBRC 100139 / OT-3).